A 213-amino-acid chain; its full sequence is Large ribosomal subunit protein uL1 (213 aa).

It belongs to the universal ribosomal protein uL1 family. In terms of assembly, part of the 50S ribosomal subunit.

Its function is as follows. Binds directly to 23S rRNA. Probably involved in E site tRNA release. Functionally, protein L1 is also a translational repressor protein, it controls the translation of its operon by binding to its mRNA. The protein is Large ribosomal subunit protein uL1 of Methanococcus maripaludis (strain C6 / ATCC BAA-1332).